Reading from the N-terminus, the 473-residue chain is tRNA-2-methylthio-N(6)-dimethylallyladenosine synthase (473 aa).

The MTTase N-terminal domain occupies 5–125; it reads RKLHIKSYGC…LPQLLARADQ (121 aa). Residues Cys-14, Cys-50, Cys-88, Cys-166, Cys-170, and Cys-173 each contribute to the [4Fe-4S] cluster site. Residues 152-384 form the Radical SAM core domain; it reads RARGISAFVT…QQLIDSQQSA (233 aa). One can recognise a TRAM domain in the interval 387-459; that stretch reads KAAIGQTVDV…RYSLLGELAA (73 aa).

The protein belongs to the methylthiotransferase family. MiaB subfamily. As to quaternary structure, monomer. Requires [4Fe-4S] cluster as cofactor.

It is found in the cytoplasm. It carries out the reaction N(6)-dimethylallyladenosine(37) in tRNA + (sulfur carrier)-SH + AH2 + 2 S-adenosyl-L-methionine = 2-methylsulfanyl-N(6)-dimethylallyladenosine(37) in tRNA + (sulfur carrier)-H + 5'-deoxyadenosine + L-methionine + A + S-adenosyl-L-homocysteine + 2 H(+). Catalyzes the methylthiolation of N6-(dimethylallyl)adenosine (i(6)A), leading to the formation of 2-methylthio-N6-(dimethylallyl)adenosine (ms(2)i(6)A) at position 37 in tRNAs that read codons beginning with uridine. This is tRNA-2-methylthio-N(6)-dimethylallyladenosine synthase from Rhodopseudomonas palustris (strain BisB5).